The chain runs to 372 residues: Chaperone protein DnaJ (372 aa).

In terms of domain architecture, J spans Asp5–Gly69. The CR-type zinc finger occupies Gly139 to Arg221. The Zn(2+) site is built by Cys152, Cys155, Cys169, Cys172, Cys195, Cys198, Cys209, and Cys212. 4 CXXCXGXG motif repeats span residues Cys152 to Gly159, Cys169 to Gly176, Cys195 to Gly202, and Cys209 to Gly216.

This sequence belongs to the DnaJ family. As to quaternary structure, homodimer. Zn(2+) is required as a cofactor.

The protein localises to the cytoplasm. In terms of biological role, participates actively in the response to hyperosmotic and heat shock by preventing the aggregation of stress-denatured proteins and by disaggregating proteins, also in an autonomous, DnaK-independent fashion. Unfolded proteins bind initially to DnaJ; upon interaction with the DnaJ-bound protein, DnaK hydrolyzes its bound ATP, resulting in the formation of a stable complex. GrpE releases ADP from DnaK; ATP binding to DnaK triggers the release of the substrate protein, thus completing the reaction cycle. Several rounds of ATP-dependent interactions between DnaJ, DnaK and GrpE are required for fully efficient folding. Also involved, together with DnaK and GrpE, in the DNA replication of plasmids through activation of initiation proteins. The chain is Chaperone protein DnaJ from Mycoplasma mycoides subsp. mycoides SC (strain CCUG 32753 / NCTC 10114 / PG1).